Consider the following 194-residue polypeptide: Methylated-DNA--protein-cysteine methyltransferase (194 aa).

Residues Tyr125 and Arg139 each coordinate DNA. Residue Cys156 is the Nucleophile; methyl group acceptor of the active site. Ser162 lines the DNA pocket.

It belongs to the MGMT family.

The protein resides in the nucleus. The enzyme catalyses a 6-O-methyl-2'-deoxyguanosine in DNA + L-cysteinyl-[protein] = S-methyl-L-cysteinyl-[protein] + a 2'-deoxyguanosine in DNA. It carries out the reaction a 4-O-methyl-thymidine in DNA + L-cysteinyl-[protein] = a thymidine in DNA + S-methyl-L-cysteinyl-[protein]. In terms of biological role, involved in the cellular defense against the biological effects of O6-methylguanine (O6-MeG) and O4-methylthymine (O4-MeT) in DNA. Repairs the methylated nucleobase in DNA by stoichiometrically transferring the methyl group to a cysteine residue in the enzyme. This is a suicide reaction: the enzyme is irreversibly inactivated. The polypeptide is Methylated-DNA--protein-cysteine methyltransferase (MGT1) (Scheffersomyces stipitis (strain ATCC 58785 / CBS 6054 / NBRC 10063 / NRRL Y-11545) (Yeast)).